A 419-amino-acid chain; its full sequence is NFATC2-interacting protein (419 aa).

Disordered stretches follow at residues M1–K131 and D151–A215. Positions W11–G27 are enriched in gly residues. Positions Q35–V51 are enriched in low complexity. Residues S54, S84, S88, S90, S92, and S127 each carry the phosphoserine modification. Residues K129 and K131 each participate in a glycyl lysine isopeptide (Lys-Gly) (interchain with G-Cter in SUMO2) cross-link. Residues R180–F192 show a composition bias toward basic and acidic residues. A phosphoserine mark is found at S198, S201, S204, S220, and S314. Residues S209–S231 adopt a coiled-coil conformation. Phosphothreonine occurs at positions 316 and 318. Residues L348–G419 enclose the Ubiquitin-like domain. S369 and S390 each carry phosphoserine.

As to quaternary structure, interacts with NFATC2, TRAF1, TRAF2 and PRMT1. Interacts with UBE2I/UBC9. In terms of processing, methylation at the N-terminus by PRMT1 modulates interaction with the NFAT complex and results in augmented cytokine production.

Its subcellular location is the nucleus. The protein resides in the cytoplasm. In terms of biological role, in T-helper 2 (Th2) cells, regulates the magnitude of NFAT-driven transcription of a specific subset of cytokine genes, including IL3, IL4, IL5 and IL13, but not IL2. Recruits PRMT1 to the IL4 promoter; this leads to enhancement of histone H4 'Arg-3'-methylation and facilitates subsequent histone acetylation at the IL4 locus, thus promotes robust cytokine expression. Down-regulates formation of poly-SUMO chains by UBE2I/UBC9. This Homo sapiens (Human) protein is NFATC2-interacting protein (NFATC2IP).